Consider the following 108-residue polypeptide: UPF0145 protein Npun_F4817 (108 aa).

It belongs to the UPF0145 family.

In Nostoc punctiforme (strain ATCC 29133 / PCC 73102), this protein is UPF0145 protein Npun_F4817.